A 281-amino-acid chain; its full sequence is Undecaprenyl-diphosphatase (281 aa).

8 consecutive transmembrane segments (helical) span residues 2–22, 46–66, 93–113, 115–135, 152–172, 190–210, 228–248, and 259–279; these read FDLIKAIIIGIIEGLTEFLPV, AFSSVFDYSIQLGAIFAVIQL, VIVGVLPAIVFGFALNDFMDA, LMNFWVVSATLIIYGIAFIVI, ITFKLALYIGLFQVLSIVPGT, FVAAEFSFFLSIPVMFGVTFL, IVMLVGFIVSWIVAWFAIKFM, and VFGYYRIIIGAIFLVFGILGI.

Belongs to the UppP family.

Its subcellular location is the cell membrane. It carries out the reaction di-trans,octa-cis-undecaprenyl diphosphate + H2O = di-trans,octa-cis-undecaprenyl phosphate + phosphate + H(+). Its function is as follows. Catalyzes the dephosphorylation of undecaprenyl diphosphate (UPP). Confers resistance to bacitracin. This Leuconostoc mesenteroides subsp. mesenteroides (strain ATCC 8293 / DSM 20343 / BCRC 11652 / CCM 1803 / JCM 6124 / NCDO 523 / NBRC 100496 / NCIMB 8023 / NCTC 12954 / NRRL B-1118 / 37Y) protein is Undecaprenyl-diphosphatase.